We begin with the raw amino-acid sequence, 230 residues long: uncharacterized protein (230 aa).

It belongs to the transferase hexapeptide repeat family.

This is an uncharacterized protein from Escherichia coli O6:K15:H31 (strain 536 / UPEC).